The chain runs to 1516 residues: Lysine-specific demethylase 5C (1516 aa).

Positions 14 to 55 constitute a JmjN domain; it reads CPVFEPSWAEFRDPLGYIAKIRPIAEKSGICKIRPPADWQPP. The region spanning 24–128 is the ARID domain; sequence FRDPLGYIAK…IVYPYEMYQS (105 aa). Residues 142-151 show a composition bias toward basic and acidic residues; it reads NEEKDKEYKP. The tract at residues 142-186 is disordered; sequence NEEKDKEYKPHSIPLRQSVQPSKFNSYGRRAKRLQPDPEPTEEDI. Over residues 156-166 the composition is skewed to polar residues; sequence LRQSVQPSKFN. Glycyl lysine isopeptide (Lys-Gly) (interchain with G-Cter in SUMO2) cross-links involve residues K164, K188, K203, and K233. Residues 216-262 are disordered; that stretch reads LRKKDKEGPECPPTVVVKEESGGDVKVESTSPKTFLESKEELSHSPE. Basic and acidic residues predominate over residues 232–242; the sequence is VKEESGGDVKV. A Phosphoserine modification is found at S246. K254 is covalently cross-linked (Glycyl lysine isopeptide (Lys-Gly) (interchain with G-Cter in SUMO2)). Phosphoserine is present on residues S260 and S276. The PHD-type 1 zinc-finger motif lies at 283 to 333; sequence SYVCRMCSRGDEDDKLLLCDGCDDNYHIFCLLPPLPEIPKGVWRCPKCVMA. Residue Y399 participates in 2-oxoglutarate binding. The region spanning 427 to 593 is the JmjC domain; sequence EYATSGWNLN…AGRQCIEHYR (167 aa). H473 and E475 together coordinate Fe cation. Positions 481, 483, and 491 each coordinate 2-oxoglutarate. H561 lines the Fe cation pocket. A C5HC2 zinc finger spans residues 666-718; the sequence is CIKCKTTCFLSALACYDCPDGLVCLSHINDLCKCSSSRQYLRYRYTLDELPAM. Phosphoserine is present on residues S852 and S856. A Glycyl lysine isopeptide (Lys-Gly) (interchain with G-Cter in SUMO2) cross-link involves residue K1086. The segment at 1144-1209 adopts a PHD-type 2 zinc-finger fold; the sequence is TSICVCGQVP…KFLCPLCMRS (66 aa). A disordered region spans residues 1274–1305; the sequence is LQAEPRPEEPPTYPSTPAFDPLREGSGKDMPK. Residues 1294–1304 are compositionally biased toward basic and acidic residues; the sequence is PLREGSGKDMP. The residue at position 1318 (S1318) is a Phosphoserine. Positions 1400–1516 are disordered; the sequence is ERHGSRARGR…CPQQPPQQQL (117 aa). A compositionally biased stretch (basic residues) spans 1404 to 1419; that stretch reads SRARGRALERRRRRKV. The segment covering 1420 to 1437 has biased composition (basic and acidic residues); sequence DRGGEGDDPAREELEPKR. The segment covering 1444–1459 has biased composition (acidic residues); that stretch reads EAEEAHEEEELEEETG. Polar residues-rich tracts occupy residues 1471–1481 and 1489–1500; these read GSPSTQENQNG and SSGSSVPFSTLT.

The protein belongs to the JARID1 histone demethylase family. Part of two distinct complexes, one containing E2F6, and the other containing REST. Interacts with ZMYND8. It depends on Fe(2+) as a cofactor.

The protein resides in the nucleus. It catalyses the reaction N(6),N(6),N(6)-trimethyl-L-lysyl(4)-[histone H3] + 3 2-oxoglutarate + 3 O2 = L-lysyl(4)-[histone H3] + 3 formaldehyde + 3 succinate + 3 CO2. Functionally, histone demethylase that specifically demethylates 'Lys-4' of histone H3, thereby playing a central role in histone code. Does not demethylate histone H3 'Lys-9', H3 'Lys-27', H3 'Lys-36', H3 'Lys-79' or H4 'Lys-20'. Demethylates trimethylated and dimethylated but not monomethylated H3 'Lys-4'. Participates in transcriptional repression of neuronal genes by recruiting histone deacetylases and REST at neuron-restrictive silencer elements. The polypeptide is Lysine-specific demethylase 5C (KDM5C) (Sus scrofa (Pig)).